The following is a 787-amino-acid chain: Lon protease (787 aa).

The 199-residue stretch at 12–210 folds into the Lon N-terminal domain; the sequence is LPLIPLRGLA…LIYSILLEEI (199 aa). 362-369 is a binding site for ATP; it reads GPPGTGKT. The 182-residue stretch at 599–780 folds into the Lon proteolytic domain; the sequence is NPQIGLVNGL…DEVLEQALLK (182 aa). Active-site residues include serine 686 and lysine 729.

It belongs to the peptidase S16 family. Homohexamer. Organized in a ring with a central cavity.

The protein resides in the cytoplasm. The enzyme catalyses Hydrolysis of proteins in presence of ATP.. Its function is as follows. ATP-dependent serine protease that mediates the selective degradation of mutant and abnormal proteins as well as certain short-lived regulatory proteins. Required for cellular homeostasis and for survival from DNA damage and developmental changes induced by stress. Degrades polypeptides processively to yield small peptide fragments that are 5 to 10 amino acids long. Binds to DNA in a double-stranded, site-specific manner. This is Lon protease from Clostridioides difficile (strain 630) (Peptoclostridium difficile).